The following is a 172-amino-acid chain: Adenine phosphoribosyltransferase (172 aa).

This sequence belongs to the purine/pyrimidine phosphoribosyltransferase family. Homodimer.

The protein resides in the cytoplasm. The catalysed reaction is AMP + diphosphate = 5-phospho-alpha-D-ribose 1-diphosphate + adenine. It participates in purine metabolism; AMP biosynthesis via salvage pathway; AMP from adenine: step 1/1. Its function is as follows. Catalyzes a salvage reaction resulting in the formation of AMP, that is energically less costly than de novo synthesis. This chain is Adenine phosphoribosyltransferase, found in Alkaliphilus oremlandii (strain OhILAs) (Clostridium oremlandii (strain OhILAs)).